We begin with the raw amino-acid sequence, 342 residues long: N-acetyl-gamma-glutamyl-phosphate reductase (342 aa).

The active site involves Cys-149.

This sequence belongs to the NAGSA dehydrogenase family. Type 1 subfamily.

Its subcellular location is the cytoplasm. The catalysed reaction is N-acetyl-L-glutamate 5-semialdehyde + phosphate + NADP(+) = N-acetyl-L-glutamyl 5-phosphate + NADPH + H(+). The protein operates within amino-acid biosynthesis; L-arginine biosynthesis; N(2)-acetyl-L-ornithine from L-glutamate: step 3/4. In terms of biological role, catalyzes the NADPH-dependent reduction of N-acetyl-5-glutamyl phosphate to yield N-acetyl-L-glutamate 5-semialdehyde. In Cereibacter sphaeroides (strain KD131 / KCTC 12085) (Rhodobacter sphaeroides), this protein is N-acetyl-gamma-glutamyl-phosphate reductase.